The sequence spans 287 residues: Glutamate racemase (287 aa).

Residues 1–15 (MATKPQDANTTSREA) show a composition bias toward polar residues. The interval 1-25 (MATKPQDANTTSREAITSKADSPPR) is disordered. Residues 32-33 (DS) and 64-65 (YG) contribute to the substrate site. The active-site Proton donor/acceptor is the Cys96. 97–98 (NT) provides a ligand contact to substrate. The Proton donor/acceptor role is filled by Cys208. 209 to 210 (TH) lines the substrate pocket.

This sequence belongs to the aspartate/glutamate racemases family.

The catalysed reaction is L-glutamate = D-glutamate. The protein operates within cell wall biogenesis; peptidoglycan biosynthesis. In terms of biological role, provides the (R)-glutamate required for cell wall biosynthesis. The chain is Glutamate racemase from Yersinia pseudotuberculosis serotype IB (strain PB1/+).